The following is a 330-amino-acid chain: Formylaminopyrimidine-binding protein (330 aa).

An N-terminal signal peptide occupies residues M1–S18. C19 carries the N-palmitoyl cysteine lipid modification. The S-diacylglycerol cysteine moiety is linked to residue C19. Substrate-binding positions include D38–W39, Y90, N145, Y188, and E192.

This sequence belongs to the NMT1 family. The complex is likely composed of an ATP-binding protein (ThiZ), a transmembrane protein (ThiX) and a solute-binding protein (ThiY).

It is found in the cell membrane. Its pathway is cofactor biosynthesis; thiamine diphosphate biosynthesis. Functionally, participates in a thiamine pyrimidine salvage pathway as part of the ABC transporter complex ThiXYZ involved in the import of thiamine degradation products. Binds the formylaminopyrimidine N-formyl-4-amino-5-aminomethyl-2-methylpyrimidine (FAMP). Does not bind thiamine. The chain is Formylaminopyrimidine-binding protein from Halalkalibacterium halodurans (strain ATCC BAA-125 / DSM 18197 / FERM 7344 / JCM 9153 / C-125) (Bacillus halodurans).